The chain runs to 326 residues: Protein FAM50 homolog (326 aa).

The tract at residues 76–112 (EISNRDLQVARGASSSTSLAKDSQEAREKEEHVAKHT) is disordered. The segment covering 97–109 (DSQEAREKEEHVA) has biased composition (basic and acidic residues).

It belongs to the FAM50 family.

The chain is Protein FAM50 homolog from Caenorhabditis briggsae.